A 430-amino-acid polypeptide reads, in one-letter code: 3-phosphoshikimate 1-carboxyvinyltransferase (430 aa).

3-phosphoshikimate is bound by residues Lys23, Ser24, and Arg28. Lys23 contacts phosphoenolpyruvate. 2 residues coordinate phosphoenolpyruvate: Gly95 and Arg123. 4 residues coordinate 3-phosphoshikimate: Ser169, Gln171, Asp315, and Lys342. A phosphoenolpyruvate-binding site is contributed by Gln171. Asp315 (proton acceptor) is an active-site residue. Arg346 and Arg388 together coordinate phosphoenolpyruvate.

The protein belongs to the EPSP synthase family. In terms of assembly, monomer.

The protein resides in the cytoplasm. The enzyme catalyses 3-phosphoshikimate + phosphoenolpyruvate = 5-O-(1-carboxyvinyl)-3-phosphoshikimate + phosphate. The protein operates within metabolic intermediate biosynthesis; chorismate biosynthesis; chorismate from D-erythrose 4-phosphate and phosphoenolpyruvate: step 6/7. Its function is as follows. Catalyzes the transfer of the enolpyruvyl moiety of phosphoenolpyruvate (PEP) to the 5-hydroxyl of shikimate-3-phosphate (S3P) to produce enolpyruvyl shikimate-3-phosphate and inorganic phosphate. The protein is 3-phosphoshikimate 1-carboxyvinyltransferase of Streptococcus pyogenes serotype M2 (strain MGAS10270).